The following is a 22-amino-acid chain: Mu-conotoxin GIIIC (22 aa).

3 disulfide bridges follow: Cys3–Cys15, Cys4–Cys20, and Cys10–Cys21. A 4-hydroxyproline mark is found at Pro6, Pro7, and Pro17. An Alanine amide modification is found at Ala22.

The protein belongs to the conotoxin M superfamily. As to expression, expressed by the venom duct.

The protein localises to the secreted. Its function is as follows. Mu-conotoxins block voltage-gated sodium channels (Nav). This toxin shows potent activity on Nav1.4/SCN4A (IC(50)=286 nM), and weak activity on mNav1.6/SCN8A. In Conus geographus (Geography cone), this protein is Mu-conotoxin GIIIC.